Consider the following 482-residue polypeptide: Glutamate synthase [NADPH] small chain (482 aa).

In terms of domain architecture, 4Fe-4S ferredoxin-type spans 39-72 (ERANEQANRCSQCGVPFCQVHCPVSNNIPDWLKL). [4Fe-4S] cluster-binding residues include cysteine 95, cysteine 99, cysteine 105, and cysteine 109.

In terms of assembly, aggregate of 4 catalytic active heterodimers, consisting of a large and a small subunit. [4Fe-4S] cluster serves as cofactor.

It carries out the reaction 2 L-glutamate + NADP(+) = L-glutamine + 2-oxoglutarate + NADPH + H(+). It participates in amino-acid biosynthesis; L-glutamate biosynthesis via GLT pathway; L-glutamate from 2-oxoglutarate and L-glutamine (NADP(+) route): step 1/1. It functions in the pathway energy metabolism; nitrogen metabolism. The chain is Glutamate synthase [NADPH] small chain (gltD) from Azospirillum brasilense.